We begin with the raw amino-acid sequence, 544 residues long: Chaperonin GroEL (544 aa).

ATP contacts are provided by residues 30-33, Lys51, 87-91, Gly415, 479-481, and Asp495; these read TLGP, DGTTT, and NAA.

The protein belongs to the chaperonin (HSP60) family. As to quaternary structure, forms a cylinder of 14 subunits composed of two heptameric rings stacked back-to-back. Interacts with the co-chaperonin GroES.

It is found in the cytoplasm. The enzyme catalyses ATP + H2O + a folded polypeptide = ADP + phosphate + an unfolded polypeptide.. Functionally, together with its co-chaperonin GroES, plays an essential role in assisting protein folding. The GroEL-GroES system forms a nano-cage that allows encapsulation of the non-native substrate proteins and provides a physical environment optimized to promote and accelerate protein folding. In Francisella tularensis subsp. tularensis (strain SCHU S4 / Schu 4), this protein is Chaperonin GroEL.